A 94-amino-acid polypeptide reads, in one-letter code: Co-chaperonin GroES (94 aa).

This sequence belongs to the GroES chaperonin family. In terms of assembly, heptamer of 7 subunits arranged in a ring. Interacts with the chaperonin GroEL.

The protein localises to the cytoplasm. Functionally, together with the chaperonin GroEL, plays an essential role in assisting protein folding. The GroEL-GroES system forms a nano-cage that allows encapsulation of the non-native substrate proteins and provides a physical environment optimized to promote and accelerate protein folding. GroES binds to the apical surface of the GroEL ring, thereby capping the opening of the GroEL channel. The protein is Co-chaperonin GroES of Ehrlichia ruminantium (strain Gardel).